We begin with the raw amino-acid sequence, 162 residues long: Nitric oxide synthase, inducible (162 aa).

A compositionally biased stretch (polar residues) spans 24-37 (LQYHSLSKQQNESP). The segment at 24-65 (LQYHSLSKQQNESPQPLVGTGKKSPESLVKPDATPLSSPRHV) is disordered. Residues cysteine 90 and cysteine 95 each coordinate Zn(2+). Position 98 (serine 98) interacts with (6R)-L-erythro-5,6,7,8-tetrahydrobiopterin. Glutamate 132 contributes to the L-arginine binding site. Histidine 160 is a binding site for FAD.

The protein belongs to the NOS family. In terms of assembly, homodimer. Interacts with NHERF1. Interacts with GAPDH; induced by oxidatively-modified low-densitity lipoprotein (LDL(ox)). Interacts with S100A8 and S100A9 to form the iNOS-S100A8/9 transnitrosylase complex. Interacts with SPSB1, SPSB2 and SPSB4. Interacts with ELOC and CUL5 in the presence of SPSB1 or SPSB2 or SPSB4. Forms a complex with ASL, ASS1 and HSP90AA1; the complex regulates cell-autonomous L-arginine synthesis and citrulline recycling while channeling extracellular L-arginine to nitric oxide synthesis pathway. Heme b is required as a cofactor. Requires FAD as cofactor. FMN serves as cofactor. The cofactor is (6R)-L-erythro-5,6,7,8-tetrahydrobiopterin. Polyubiquitinated; mediated by SPSB1, SPSB2 and SPSB4, leading to proteasomal degradation.

Its subcellular location is the cytoplasm. The protein localises to the cytosol. The catalysed reaction is 2 L-arginine + 3 NADPH + 4 O2 + H(+) = 2 L-citrulline + 2 nitric oxide + 3 NADP(+) + 4 H2O. Regulated by calcium/calmodulin. Produces nitric oxide (NO) which is a messenger molecule with diverse functions throughout the body. In macrophages, NO mediates tumoricidal and bactericidal actions. Also has nitrosylase activity and mediates cysteine S-nitrosylation of cytoplasmic target proteins such PTGS2/COX2. As component of the iNOS-S100A8/9 transnitrosylase complex involved in the selective inflammatory stimulus-dependent S-nitrosylation of GAPDH implicated in regulation of the GAIT complex activity and probably multiple targets including ANXA5, EZR, MSN and VIM. Involved in inflammation, enhances the synthesis of pro-inflammatory mediators such as IL6 and IL8. The chain is Nitric oxide synthase, inducible (NOS2) from Macaca mulatta (Rhesus macaque).